The chain runs to 521 residues: MIKQALISVSDKTGVLEFARALSGMGVNILSTGGTAKLLAENGISVTEVADYTGFPEMLDGRVKTLHPKVHGGILARRDFAEHVSALEKHNIPTIDMVVVNLYPFQQTVAREHCSLEDAIENIDIGGPAMLRSSAKNHKDVIVICDPTDYSQVLGELSANQGEVSYETKFTLAKKVFAHTAQYDGAITNYFTSLGADKQHATRSSYPATLNLHFEKVQEMRYGENPHQSAAFYRESNPQVGALANYTQLQGKELSYNNIADADAAWECVKTFDESACVIIKHANPCGVAVGASPLEAYSKALQTDPTSAFGGIIAFNRELDGNAAEAVAKQFVEVLIAPSFSEKAKQIFAGKQNVRLLEIPLGNAVNAHDFKRVGGGLLVQSPDAKNVVLAELKVVSKKQPTPQQLQDLMFAWRVAKFVKSNAIVFCANGMTMGVGAGQMSRIDSARIASIKAQNAGLSLVGTAVASDAFFPFRDGLDVVVAAGATSVIHPGGSMRDQEVIDAADEQGVVMLMTGTRHFRH.

The MGS-like domain maps to 1-145; that stretch reads MIKQALISVS…KNHKDVIVIC (145 aa).

This sequence belongs to the PurH family.

It catalyses the reaction (6R)-10-formyltetrahydrofolate + 5-amino-1-(5-phospho-beta-D-ribosyl)imidazole-4-carboxamide = 5-formamido-1-(5-phospho-D-ribosyl)imidazole-4-carboxamide + (6S)-5,6,7,8-tetrahydrofolate. It carries out the reaction IMP + H2O = 5-formamido-1-(5-phospho-D-ribosyl)imidazole-4-carboxamide. It participates in purine metabolism; IMP biosynthesis via de novo pathway; 5-formamido-1-(5-phospho-D-ribosyl)imidazole-4-carboxamide from 5-amino-1-(5-phospho-D-ribosyl)imidazole-4-carboxamide (10-formyl THF route): step 1/1. The protein operates within purine metabolism; IMP biosynthesis via de novo pathway; IMP from 5-formamido-1-(5-phospho-D-ribosyl)imidazole-4-carboxamide: step 1/1. This chain is Bifunctional purine biosynthesis protein PurH, found in Janthinobacterium sp. (strain Marseille) (Minibacterium massiliensis).